A 78-amino-acid polypeptide reads, in one-letter code: Probable two-component-system connector protein YcgZ (78 aa).

In terms of biological role, probably a connector protein for RcsB/C regulation of biofilm formation, providing additional signal input into the two-component signaling pathway. Partially antagonizes the activities of YmgA and AriR, proteins that, via the Rcs phosphorelay, promote the synthesis of colanic acid, an exopolysaccharide and matrix component. The polypeptide is Probable two-component-system connector protein YcgZ (ycgZ) (Escherichia coli (strain K12)).